Here is a 554-residue protein sequence, read N- to C-terminus: Glutamine--tRNA ligase (554 aa).

Positions 34–44 (PEPNGYLHIGH) match the 'HIGH' region motif. ATP is bound by residues 35 to 37 (EPN) and 41 to 47 (HIGHAKS). The L-glutamine site is built by D67 and Y212. ATP contacts are provided by residues T231, 261 to 262 (RL), and 269 to 271 (MSK). Residues 268 to 272 (VMSKR) carry the 'KMSKS' region motif. Residues 317–324 (TKQDNTIE) form an interaction with tRNA region.

The protein belongs to the class-I aminoacyl-tRNA synthetase family. As to quaternary structure, monomer.

It localises to the cytoplasm. It catalyses the reaction tRNA(Gln) + L-glutamine + ATP = L-glutaminyl-tRNA(Gln) + AMP + diphosphate. This Escherichia coli O127:H6 (strain E2348/69 / EPEC) protein is Glutamine--tRNA ligase.